A 366-amino-acid chain; its full sequence is Chorismate synthase (366 aa).

Residues R48 and R54 each coordinate NADP(+). FMN-binding positions include 125 to 127 (RSS), 238 to 239 (NA), G278, 293 to 297 (KPTSS), and R319.

The protein belongs to the chorismate synthase family. Homotetramer. It depends on FMNH2 as a cofactor.

The catalysed reaction is 5-O-(1-carboxyvinyl)-3-phosphoshikimate = chorismate + phosphate. Its pathway is metabolic intermediate biosynthesis; chorismate biosynthesis; chorismate from D-erythrose 4-phosphate and phosphoenolpyruvate: step 7/7. Catalyzes the anti-1,4-elimination of the C-3 phosphate and the C-6 proR hydrogen from 5-enolpyruvylshikimate-3-phosphate (EPSP) to yield chorismate, which is the branch point compound that serves as the starting substrate for the three terminal pathways of aromatic amino acid biosynthesis. This reaction introduces a second double bond into the aromatic ring system. This Neisseria meningitidis serogroup B (strain ATCC BAA-335 / MC58) protein is Chorismate synthase.